The chain runs to 309 residues: RuBisCO operon transcriptional regulator (309 aa).

In terms of domain architecture, HTH lysR-type spans 6–63; the sequence is ATLHQLKIFAAVARHMSFARAAEELHLTPPALSIQVRQLAEAVGQPLFDQIGKKIYLT. The segment at residues 23–42 is a DNA-binding region (H-T-H motif); sequence FARAAEELHLTPPALSIQVR.

Belongs to the LysR transcriptional regulatory family.

In terms of biological role, trans-acting transcriptional regulator of RuBisCO genes (rbcL1S1) expression. The chain is RuBisCO operon transcriptional regulator (rbcR) from Acidithiobacillus ferrooxidans (Thiobacillus ferrooxidans).